The sequence spans 856 residues: DNA mismatch repair protein MutS (856 aa).

Residue 607–614 (GPNMAGKS) coordinates ATP.

It belongs to the DNA mismatch repair MutS family.

In terms of biological role, this protein is involved in the repair of mismatches in DNA. It is possible that it carries out the mismatch recognition step. This protein has a weak ATPase activity. This Cytophaga hutchinsonii (strain ATCC 33406 / DSM 1761 / CIP 103989 / NBRC 15051 / NCIMB 9469 / D465) protein is DNA mismatch repair protein MutS.